Here is a 183-residue protein sequence, read N- to C-terminus: uncharacterized protein (183 aa).

The protein belongs to the herpesviridae US1 family.

This is an uncharacterized protein from Human cytomegalovirus (strain AD169) (HHV-5).